The sequence spans 115 residues: Fluoride-specific ion channel FluC 4 (115 aa).

The next 2 membrane-spanning stretches (helical) occupy residues 19 to 39 (WGTF…AGLG) and 42 to 62 (LGGI…LLGG). Na(+) is bound by residues Gly61 and Thr64. The helical transmembrane segment at 89 to 109 (IVASALLCVLAVAAGYGGIMW) threads the bilayer.

It belongs to the fluoride channel Fluc/FEX (TC 1.A.43) family.

The protein resides in the cell inner membrane. It catalyses the reaction fluoride(in) = fluoride(out). With respect to regulation, na(+) is not transported, but it plays an essential structural role and its presence is essential for fluoride channel function. Functionally, fluoride-specific ion channel. Important for reducing fluoride concentration in the cell, thus reducing its toxicity. The chain is Fluoride-specific ion channel FluC 4 from Brucella melitensis biotype 1 (strain ATCC 23456 / CCUG 17765 / NCTC 10094 / 16M).